A 341-amino-acid chain; its full sequence is L-threonine 3-dehydrogenase (341 aa).

Cys38 is a binding site for Zn(2+). Active-site charge relay system residues include Thr40 and His43. Positions 63, 64, 93, 96, 99, and 107 each coordinate Zn(2+). Residues Ile175, Asp195, Arg200, 262 to 264 (LGI), and 286 to 287 (IY) contribute to the NAD(+) site.

Belongs to the zinc-containing alcohol dehydrogenase family. As to quaternary structure, homotetramer. Zn(2+) serves as cofactor.

Its subcellular location is the cytoplasm. The catalysed reaction is L-threonine + NAD(+) = (2S)-2-amino-3-oxobutanoate + NADH + H(+). The protein operates within amino-acid degradation; L-threonine degradation via oxydo-reductase pathway; glycine from L-threonine: step 1/2. Catalyzes the NAD(+)-dependent oxidation of L-threonine to 2-amino-3-ketobutyrate. This chain is L-threonine 3-dehydrogenase, found in Yersinia pestis bv. Antiqua (strain Antiqua).